A 325-amino-acid chain; its full sequence is Cytochrome c1, heme protein, mitochondrial (325 aa).

Residues 1–84 constitute a mitochondrion transit peptide; sequence MAAAAASLRG…AMALHSAVSA (84 aa). The Mitochondrial intermembrane segment spans residues 85-281; that stretch reads SDLELHPPSY…TFLRWASEPE (197 aa). Positions 108–209 constitute a Cytochrome c domain; sequence TSIRRGFQVY…IVRARHGGED (102 aa). Heme c contacts are provided by Cys121, Cys124, and His125. Position 182 is a phosphoserine (Ser182). Position 244 (Met244) interacts with heme c. A helical transmembrane segment spans residues 282-315; the sequence is HDHRKRMGLKMLMMMALLVPLVYTIKRHKWSVLK. The Mitochondrial matrix segment spans residues 316–325; that stretch reads SRKLAYRPPK.

Belongs to the cytochrome c family. In terms of assembly, component of the ubiquinol-cytochrome c oxidoreductase (cytochrome b-c1 complex, complex III, CIII), a multisubunit enzyme composed of 11 subunits. The complex is composed of 3 respiratory subunits cytochrome b, cytochrome c1 and Rieske protein UQCRFS1, 2 core protein subunits UQCRC1/QCR1 and UQCRC2/QCR2, and 6 low-molecular weight protein subunits UQCRH/QCR6, UQCRB/QCR7, UQCRQ/QCR8, UQCR10/QCR9, UQCR11/QCR10 and subunit 9, the cleavage product of Rieske protein UQCRFS1. The complex exists as an obligatory dimer and forms supercomplexes (SCs) in the inner mitochondrial membrane with NADH-ubiquinone oxidoreductase (complex I, CI) and cytochrome c oxidase (complex IV, CIV), resulting in different assemblies (supercomplex SCI(1)III(2)IV(1) and megacomplex MCI(2)III(2)IV(2)). Interacts with FLVCR2; this interaction occurs in the absence of heme and is disrupted upon heme binding. The cofactor is heme c.

It localises to the mitochondrion inner membrane. It carries out the reaction a quinol + 2 Fe(III)-[cytochrome c](out) = a quinone + 2 Fe(II)-[cytochrome c](out) + 2 H(+)(out). In terms of biological role, component of the ubiquinol-cytochrome c oxidoreductase, a multisubunit transmembrane complex that is part of the mitochondrial electron transport chain which drives oxidative phosphorylation. The respiratory chain contains 3 multisubunit complexes succinate dehydrogenase (complex II, CII), ubiquinol-cytochrome c oxidoreductase (cytochrome b-c1 complex, complex III, CIII) and cytochrome c oxidase (complex IV, CIV), that cooperate to transfer electrons derived from NADH and succinate to molecular oxygen, creating an electrochemical gradient over the inner membrane that drives transmembrane transport and the ATP synthase. The cytochrome b-c1 complex catalyzes electron transfer from ubiquinol to cytochrome c, linking this redox reaction to translocation of protons across the mitochondrial inner membrane, with protons being carried across the membrane as hydrogens on the quinol. In the process called Q cycle, 2 protons are consumed from the matrix, 4 protons are released into the intermembrane space and 2 electrons are passed to cytochrome c. Cytochrome c1 is a catalytic core subunit containing a c-type heme. It transfers electrons from the [2Fe-2S] iron-sulfur cluster of the Rieske protein to cytochrome c. This Homo sapiens (Human) protein is Cytochrome c1, heme protein, mitochondrial (CYC1).